The primary structure comprises 565 residues: Berberine bridge enzyme-like C-2 (565 aa).

Positions 1 to 17 (MFPIIILISFSFTFLFA) are cleaved as a signal peptide. Asparagine 28 and asparagine 40 each carry an N-linked (GlcNAc...) asparagine glycan. An intrachain disulfide couples cysteine 32 to cysteine 94. An FAD-binding PCMH-type domain is found at 72 to 248 (YMPKPTVIIL…YAWKIRLLKV (177 aa)). Histidine 109 carries the post-translational modification Pros-8alpha-FAD histidine. N-linked (GlcNAc...) asparagine glycosylation is found at asparagine 363 and asparagine 502.

This sequence belongs to the oxygen-dependent FAD-linked oxidoreductase family. It depends on FAD as a cofactor.

The protein localises to the vacuole. Its pathway is alkaloid biosynthesis; nicotine biosynthesis. Involved in the biosynthesis of pyridine alkaloid natural products, leading mainly to the production of anabasine, anatabine, nicotine and nornicotine, effective deterrents against herbivores with antiparasitic and pesticide properties (neurotoxins); nornicotine serves as the precursor in the synthesis of the carcinogen compound N'-nitrosonornicotine (NNN). Catalyzes a late oxidation step subsequent to the pyridine ring condensation reaction in the biosynthesis of alkaloids. In Nicotiana tabacum (Common tobacco), this protein is Berberine bridge enzyme-like C-2.